We begin with the raw amino-acid sequence, 85 residues long: RNA-binding protein Hfq (85 aa).

A Sm domain is found at 9-68; that stretch reads DPFLNALRRERIPVSIYLVNGIKLQGQIESFDQFVILLKNTVNQMVYKHAISTVVPARPV. Residues 66-85 are disordered; it reads RPVNHHHASDRPATLEKTEE. The span at 72–85 shows a compositional bias: basic and acidic residues; that stretch reads HASDRPATLEKTEE.

The protein belongs to the Hfq family. Homohexamer.

RNA chaperone that binds small regulatory RNA (sRNAs) and mRNAs to facilitate mRNA translational regulation in response to envelope stress, environmental stress and changes in metabolite concentrations. Also binds with high specificity to tRNAs. In Photobacterium profundum (strain SS9), this protein is RNA-binding protein Hfq.